Here is a 300-residue protein sequence, read N- to C-terminus: Phosphatidylglycerol--prolipoprotein diacylglyceryl transferase (300 aa).

The next 7 membrane-spanning stretches (helical) occupy residues Leu-17–Gly-37, Met-59–Tyr-79, Val-94–Leu-114, Phe-129–Gly-149, Ser-204–Ala-224, Met-230–Phe-250, and Leu-265–Trp-285. Arg-142 contributes to the a 1,2-diacyl-sn-glycero-3-phospho-(1'-sn-glycerol) binding site.

The protein belongs to the Lgt family.

The protein localises to the cell inner membrane. The catalysed reaction is L-cysteinyl-[prolipoprotein] + a 1,2-diacyl-sn-glycero-3-phospho-(1'-sn-glycerol) = an S-1,2-diacyl-sn-glyceryl-L-cysteinyl-[prolipoprotein] + sn-glycerol 1-phosphate + H(+). Its pathway is protein modification; lipoprotein biosynthesis (diacylglyceryl transfer). Functionally, catalyzes the transfer of the diacylglyceryl group from phosphatidylglycerol to the sulfhydryl group of the N-terminal cysteine of a prolipoprotein, the first step in the formation of mature lipoproteins. This chain is Phosphatidylglycerol--prolipoprotein diacylglyceryl transferase, found in Ralstonia pickettii (strain 12J).